We begin with the raw amino-acid sequence, 376 residues long: Queuine tRNA-ribosyltransferase (376 aa).

Aspartate 90 acts as the Proton acceptor in catalysis. Residues 90–94 (DSGGF), aspartate 144, glutamine 193, and glycine 220 contribute to the substrate site. The interval 251-257 (GVGTPED) is RNA binding. Residue aspartate 270 is the Nucleophile of the active site. The interval 275-279 (TRNAR) is RNA binding; important for wobble base 34 recognition. Zn(2+)-binding residues include cysteine 308, cysteine 310, cysteine 313, and histidine 339.

The protein belongs to the queuine tRNA-ribosyltransferase family. Homodimer. Within each dimer, one monomer is responsible for RNA recognition and catalysis, while the other monomer binds to the replacement base PreQ1. It depends on Zn(2+) as a cofactor.

It carries out the reaction 7-aminomethyl-7-carbaguanine + guanosine(34) in tRNA = 7-aminomethyl-7-carbaguanosine(34) in tRNA + guanine. Its pathway is tRNA modification; tRNA-queuosine biosynthesis. Its function is as follows. Catalyzes the base-exchange of a guanine (G) residue with the queuine precursor 7-aminomethyl-7-deazaguanine (PreQ1) at position 34 (anticodon wobble position) in tRNAs with GU(N) anticodons (tRNA-Asp, -Asn, -His and -Tyr). Catalysis occurs through a double-displacement mechanism. The nucleophile active site attacks the C1' of nucleotide 34 to detach the guanine base from the RNA, forming a covalent enzyme-RNA intermediate. The proton acceptor active site deprotonates the incoming PreQ1, allowing a nucleophilic attack on the C1' of the ribose to form the product. After dissociation, two additional enzymatic reactions on the tRNA convert PreQ1 to queuine (Q), resulting in the hypermodified nucleoside queuosine (7-(((4,5-cis-dihydroxy-2-cyclopenten-1-yl)amino)methyl)-7-deazaguanosine). This Cupriavidus necator (strain ATCC 17699 / DSM 428 / KCTC 22496 / NCIMB 10442 / H16 / Stanier 337) (Ralstonia eutropha) protein is Queuine tRNA-ribosyltransferase.